Reading from the N-terminus, the 1342-residue chain is DNA-directed RNA polymerase subunit beta (1342 aa).

This sequence belongs to the RNA polymerase beta chain family. The RNAP catalytic core consists of 2 alpha, 1 beta, 1 beta' and 1 omega subunit. When a sigma factor is associated with the core the holoenzyme is formed, which can initiate transcription.

It catalyses the reaction RNA(n) + a ribonucleoside 5'-triphosphate = RNA(n+1) + diphosphate. DNA-dependent RNA polymerase catalyzes the transcription of DNA into RNA using the four ribonucleoside triphosphates as substrates. The protein is DNA-directed RNA polymerase subunit beta of Wigglesworthia glossinidia brevipalpis.